The chain runs to 460 residues: Acetyl-coenzyme A carboxylase carboxyl transferase subunit beta, chloroplastic (460 aa).

The 282-residue stretch at 179–460 (LWVQCESCYG…GFFPLTQNGN (282 aa)) folds into the CoA carboxyltransferase N-terminal domain. Residues Cys183, Cys186, Cys202, and Cys205 each coordinate Zn(2+). The C4-type zinc finger occupies 183 to 205 (CESCYGLNYKKFFKSKMNICEHC).

This sequence belongs to the AccD/PCCB family. Acetyl-CoA carboxylase is a heterohexamer composed of biotin carboxyl carrier protein, biotin carboxylase and 2 subunits each of ACCase subunit alpha and ACCase plastid-coded subunit beta (accD). The cofactor is Zn(2+).

The protein resides in the plastid. It localises to the chloroplast stroma. The enzyme catalyses N(6)-carboxybiotinyl-L-lysyl-[protein] + acetyl-CoA = N(6)-biotinyl-L-lysyl-[protein] + malonyl-CoA. It participates in lipid metabolism; malonyl-CoA biosynthesis; malonyl-CoA from acetyl-CoA: step 1/1. Component of the acetyl coenzyme A carboxylase (ACC) complex. Biotin carboxylase (BC) catalyzes the carboxylation of biotin on its carrier protein (BCCP) and then the CO(2) group is transferred by the transcarboxylase to acetyl-CoA to form malonyl-CoA. This Cicer arietinum (Chickpea) protein is Acetyl-coenzyme A carboxylase carboxyl transferase subunit beta, chloroplastic.